The sequence spans 76 residues: Exodeoxyribonuclease 7 small subunit (76 aa).

This sequence belongs to the XseB family. In terms of assembly, heterooligomer composed of large and small subunits.

It localises to the cytoplasm. The enzyme catalyses Exonucleolytic cleavage in either 5'- to 3'- or 3'- to 5'-direction to yield nucleoside 5'-phosphates.. Bidirectionally degrades single-stranded DNA into large acid-insoluble oligonucleotides, which are then degraded further into small acid-soluble oligonucleotides. This Gluconacetobacter diazotrophicus (strain ATCC 49037 / DSM 5601 / CCUG 37298 / CIP 103539 / LMG 7603 / PAl5) protein is Exodeoxyribonuclease 7 small subunit.